Reading from the N-terminus, the 572-residue chain is Phosphoglucomutase-1 (572 aa).

Substrate contacts are provided by residues threonine 23, arginine 27, 120–121 (SH), and lysine 133. Serine 120 acts as the Phosphoserine intermediate in catalysis. Serine 120 contacts Mg(2+). Mg(2+)-binding residues include aspartate 288, aspartate 290, and aspartate 292. Substrate-binding positions include 292-293 (DR), threonine 356, 375-377 (EES), lysine 388, and arginine 524.

The protein belongs to the phosphohexose mutase family. Mg(2+) is required as a cofactor.

The protein localises to the cytoplasm. The catalysed reaction is alpha-D-glucose 1-phosphate = alpha-D-glucose 6-phosphate. In terms of biological role, this enzyme participates in both the breakdown and synthesis of glucose. The protein is Phosphoglucomutase-1 (pgmA) of Dictyostelium discoideum (Social amoeba).